The following is a 339-amino-acid chain: Ketol-acid reductoisomerase (NADP(+)) (339 aa).

One can recognise a KARI N-terminal Rossmann domain in the interval 1 to 182 (MRVYYDRDAD…GGGRAGIIET (182 aa)). Residues 24–27 (YGSQ), arginine 48, serine 51, serine 53, and 83–86 (DELQ) each bind NADP(+). Residue histidine 108 is part of the active site. Residue glycine 134 coordinates NADP(+). The KARI C-terminal knotted domain maps to 183–328 (TFKEECETDL…ERLRAMMPWI (146 aa)). Mg(2+)-binding residues include aspartate 191, glutamate 195, glutamate 227, and glutamate 231. Serine 252 contributes to the substrate binding site.

This sequence belongs to the ketol-acid reductoisomerase family. It depends on Mg(2+) as a cofactor.

The enzyme catalyses (2R)-2,3-dihydroxy-3-methylbutanoate + NADP(+) = (2S)-2-acetolactate + NADPH + H(+). It catalyses the reaction (2R,3R)-2,3-dihydroxy-3-methylpentanoate + NADP(+) = (S)-2-ethyl-2-hydroxy-3-oxobutanoate + NADPH + H(+). The protein operates within amino-acid biosynthesis; L-isoleucine biosynthesis; L-isoleucine from 2-oxobutanoate: step 2/4. It participates in amino-acid biosynthesis; L-valine biosynthesis; L-valine from pyruvate: step 2/4. Involved in the biosynthesis of branched-chain amino acids (BCAA). Catalyzes an alkyl-migration followed by a ketol-acid reduction of (S)-2-acetolactate (S2AL) to yield (R)-2,3-dihydroxy-isovalerate. In the isomerase reaction, S2AL is rearranged via a Mg-dependent methyl migration to produce 3-hydroxy-3-methyl-2-ketobutyrate (HMKB). In the reductase reaction, this 2-ketoacid undergoes a metal-dependent reduction by NADPH to yield (R)-2,3-dihydroxy-isovalerate. This chain is Ketol-acid reductoisomerase (NADP(+)), found in Methylobacterium nodulans (strain LMG 21967 / CNCM I-2342 / ORS 2060).